Here is a 457-residue protein sequence, read N- to C-terminus: Exodeoxyribonuclease 7 large subunit (457 aa).

This sequence belongs to the XseA family. As to quaternary structure, heterooligomer composed of large and small subunits.

Its subcellular location is the cytoplasm. It carries out the reaction Exonucleolytic cleavage in either 5'- to 3'- or 3'- to 5'-direction to yield nucleoside 5'-phosphates.. Bidirectionally degrades single-stranded DNA into large acid-insoluble oligonucleotides, which are then degraded further into small acid-soluble oligonucleotides. The chain is Exodeoxyribonuclease 7 large subunit from Citrobacter koseri (strain ATCC BAA-895 / CDC 4225-83 / SGSC4696).